A 257-amino-acid polypeptide reads, in one-letter code: Aspartate/glutamate leucyltransferase (257 aa).

The protein belongs to the R-transferase family. Bpt subfamily.

Its subcellular location is the cytoplasm. The catalysed reaction is N-terminal L-glutamyl-[protein] + L-leucyl-tRNA(Leu) = N-terminal L-leucyl-L-glutamyl-[protein] + tRNA(Leu) + H(+). It carries out the reaction N-terminal L-aspartyl-[protein] + L-leucyl-tRNA(Leu) = N-terminal L-leucyl-L-aspartyl-[protein] + tRNA(Leu) + H(+). Functionally, functions in the N-end rule pathway of protein degradation where it conjugates Leu from its aminoacyl-tRNA to the N-termini of proteins containing an N-terminal aspartate or glutamate. The chain is Aspartate/glutamate leucyltransferase from Rhodopseudomonas palustris (strain HaA2).